Reading from the N-terminus, the 210-residue chain is 2-hydroxy-3-keto-5-methylthiopentenyl-1-phosphate phosphatase (210 aa).

This sequence belongs to the HAD-like hydrolase superfamily. MtnX family.

It carries out the reaction 2-hydroxy-5-methylsulfanyl-3-oxopent-1-enyl phosphate + H2O = 1,2-dihydroxy-5-(methylsulfanyl)pent-1-en-3-one + phosphate. The protein operates within amino-acid biosynthesis; L-methionine biosynthesis via salvage pathway; L-methionine from S-methyl-5-thio-alpha-D-ribose 1-phosphate: step 4/6. Dephosphorylates 2-hydroxy-3-keto-5-methylthiopentenyl-1-phosphate (HK-MTPenyl-1-P) yielding 1,2-dihydroxy-3-keto-5-methylthiopentene (DHK-MTPene). This Microcystis aeruginosa (strain NIES-843 / IAM M-2473) protein is 2-hydroxy-3-keto-5-methylthiopentenyl-1-phosphate phosphatase.